A 628-amino-acid chain; its full sequence is Kelch-like protein diablo (628 aa).

The interval 1-56 is disordered; the sequence is MGDLPGSTGGGSGPAAAGNASGNASSAGNTGLGVAGTTGVDRPPSPARLSHTSEKH. Positions 14–29 are enriched in low complexity; that stretch reads PAAAGNASGNASSAGN. One can recognise a BTB domain in the interval 74–141; it reads CDVVLNVGGR…CYTAHIIVEE (68 aa). One can recognise a BACK domain in the interval 176–278; it reads CLGIRAFADT…SPKFLVGTVG (103 aa). Kelch repeat units lie at residues 325–371, 373–419, 420–466, 468–513, 515–560, and 561–607; these read VLFA…VLND, LYAV…VLDG, FLYA…VLGG, LYAI…VFNN, IYAV…VVNG, and QLYA…VMRA.

It functions in the pathway protein modification; protein ubiquitination. In terms of biological role, probable substrate-specific adapter of an E3 ubiquitin-protein ligase complex which mediates the ubiquitination and subsequent proteasomal degradation of target proteins. May have a role in synapse differentiation and growth. This is Kelch-like protein diablo from Drosophila pseudoobscura pseudoobscura (Fruit fly).